Consider the following 418-residue polypeptide: RapA guanosine triphosphatase-activating protein B (418 aa).

Residues 142 to 407 form the Rap-GAP domain; that stretch reads LVKVCEPEFN…EKASALINVI (266 aa). A disordered region spans residues 304–339; sequence NRVVGEQPSPSLTTTTTTTTTTSPTINSNSPTPSNK. Low complexity predominate over residues 311-338; sequence PSPSLTTTTTTTTTTSPTINSNSPTPSN.

Its function is as follows. Mediates the deactivation of rap1 during multicellular development and is required for normal morphogenesis. Also required for the correct patterning of specific subtypes of prestalk cells. In Dictyostelium discoideum (Social amoeba), this protein is RapA guanosine triphosphatase-activating protein B (rapgapB).